The primary structure comprises 323 residues: 1D-myo-inositol 2-acetamido-2-deoxy-alpha-D-glucopyranoside deacetylase 1 (323 aa).

Histidine 30, aspartate 33, and histidine 165 together coordinate Zn(2+).

This sequence belongs to the MshB deacetylase family. Zn(2+) is required as a cofactor.

The catalysed reaction is 1D-myo-inositol 2-acetamido-2-deoxy-alpha-D-glucopyranoside + H2O = 1D-myo-inositol 2-amino-2-deoxy-alpha-D-glucopyranoside + acetate. Catalyzes the deacetylation of 1D-myo-inositol 2-acetamido-2-deoxy-alpha-D-glucopyranoside (GlcNAc-Ins) in the mycothiol biosynthesis pathway. The protein is 1D-myo-inositol 2-acetamido-2-deoxy-alpha-D-glucopyranoside deacetylase 1 of Catenulispora acidiphila (strain DSM 44928 / JCM 14897 / NBRC 102108 / NRRL B-24433 / ID139908).